The chain runs to 236 residues: 2,3,4,5-tetrahydropyridine-2,6-dicarboxylate N-acetyltransferase (236 aa).

It belongs to the transferase hexapeptide repeat family. DapH subfamily.

It carries out the reaction (S)-2,3,4,5-tetrahydrodipicolinate + acetyl-CoA + H2O = L-2-acetamido-6-oxoheptanedioate + CoA. The protein operates within amino-acid biosynthesis; L-lysine biosynthesis via DAP pathway; LL-2,6-diaminopimelate from (S)-tetrahydrodipicolinate (acetylase route): step 1/3. Catalyzes the transfer of an acetyl group from acetyl-CoA to tetrahydrodipicolinate. The polypeptide is 2,3,4,5-tetrahydropyridine-2,6-dicarboxylate N-acetyltransferase (Clostridium perfringens (strain ATCC 13124 / DSM 756 / JCM 1290 / NCIMB 6125 / NCTC 8237 / Type A)).